Reading from the N-terminus, the 492-residue chain is Stomatal closure-related actin-binding protein 2 (492 aa).

A coiled-coil region spans residues 112 to 132; sequence LKKLRDALETMRGRMDGRNRE.

It belongs to the SCAB family. In terms of tissue distribution, expressed in roots, stems, leaves, siliques and flowers.

The protein resides in the cytoplasm. The protein localises to the cytoskeleton. Its function is as follows. Probable plant-specific actin binding protein that bundles and stabilizes microfilaments (MFs). The chain is Stomatal closure-related actin-binding protein 2 from Arabidopsis thaliana (Mouse-ear cress).